A 28-amino-acid chain; its full sequence is N-acetyl-D-galactosamine-binding lectin subunit A (28 aa).

This sequence belongs to the ribosome-inactivating protein family. As to quaternary structure, disulfide-linked heterodimer of A and B chains.

It carries out the reaction Endohydrolysis of the N-glycosidic bond at one specific adenosine on the 28S rRNA.. In terms of biological role, gal / GalNAc-specific lectin. Agglutinates both native and trypsin-treated rabbit erythrocytes but not human erythrocytes irrespective of blood group type. This is N-acetyl-D-galactosamine-binding lectin subunit A from Iris hollandica (Dutch iris).